The chain runs to 92 residues: Large ribosomal subunit protein bL28 (92 aa).

Residues 1–34 (MGRECEITGKKTMFGNNVPRKGLSRKKGGGGQHI) are disordered.

This sequence belongs to the bacterial ribosomal protein bL28 family.

This Borrelia turicatae (strain 91E135) protein is Large ribosomal subunit protein bL28.